Here is a 200-residue protein sequence, read N- to C-terminus: Max dimerization protein 3 (200 aa).

Disordered stretches follow at residues 26–56 (EHGYASILPCDPATPGRRKRQRTNSNPDNVR) and 134–164 (LLPPNTERIRTDSLDSSTLSSERSDSDQEDL). The region spanning 54 to 106 (NVRSVHNELEKHRRAQLRRCLEQLKQQVPLSMENSRHTTLSLLHRAKQHIKKL) is the bHLH domain.

As to quaternary structure, efficient DNA binding requires dimerization with another bHLH protein. Binds DNA as a heterodimer with MAX.

Its subcellular location is the nucleus. In terms of biological role, transcriptional repressor. Binds with MAX to form a sequence-specific DNA-binding protein complex which recognizes the core sequence 5'-CAC[GA]TG-3'. This chain is Max dimerization protein 3 (mxd3), found in Xenopus tropicalis (Western clawed frog).